A 132-amino-acid polypeptide reads, in one-letter code: Translation initiation factor 5A (132 aa).

Position 36 is a hypusine (Lys-36).

Belongs to the eIF-5A family.

The protein localises to the cytoplasm. Its function is as follows. Functions by promoting the formation of the first peptide bond. This is Translation initiation factor 5A (eIF5A) from Desulfurococcus amylolyticus (strain DSM 18924 / JCM 16383 / VKM B-2413 / 1221n) (Desulfurococcus kamchatkensis).